A 923-amino-acid chain; its full sequence is Smoothelin (923 aa).

A2 carries the N-acetylalanine modification. Residues 24–89 (LAERRRIRSA…ARLAGRLESM (66 aa)) adopt a coiled-coil conformation. The segment at 134 to 456 (SRLPSSGPRE…GTGEPGGSMK (323 aa)) is disordered. Composition is skewed to low complexity over residues 164 to 179 (QEQQTEVLEPTPTPED) and 192 to 205 (RAPPGGRPSSPASP). Over residues 237–252 (LPHPSEAPSPEPPMSP) the composition is skewed to pro residues. 2 stretches are compositionally biased toward polar residues: residues 272 to 285 (PSDTLDSIRGFSNT) and 293 to 314 (TKSCQRSLSVLSPRQPTPNREP). Phosphoserine occurs at positions 299, 301, 304, and 340. T359 and T372 each carry phosphothreonine. Over residues 366 to 389 (PSLISTTPASSSSSNSSSPSPSDT) the composition is skewed to low complexity. Phosphoserine occurs at positions 501, 521, and 574. 2 disordered regions span residues 542–578 (KMEPDPAEPPSTTVEAANGAEQARVDKGPEGRSPLSA) and 615–772 (QRKR…ARKA). Positions 601 to 628 (EERKLIRAALRELRQRKRDQRDKERERR) form a coiled coil. Residues 615–638 (QRKRDQRDKERERRLREARARPGE) are compositionally biased toward basic and acidic residues. S641 bears the Phosphoserine mark. Residues 674 to 687 (NDGTQTARTTTVES) are compositionally biased toward polar residues. Residues 697-721 (SSSSSTTTTTVQTKSFSSSSSSSSS) show a composition bias toward low complexity. S735 carries the post-translational modification Phosphoserine. Residues 744–756 (LERRQAEKKKELM) show a composition bias toward basic and acidic residues. At S798 the chain carries Phosphoserine. Positions 805–912 (NSIKQMLLDW…YVQSLYNHLR (108 aa)) constitute a Calponin-homology (CH) domain.

This sequence belongs to the smoothelin family.

The protein resides in the cytoplasm. The protein localises to the cytoskeleton. In terms of biological role, structural protein of the cytoskeleton. This Mus musculus (Mouse) protein is Smoothelin (Smtn).